The sequence spans 98 residues: UPF0235 protein Mmc1_3654 (98 aa).

It belongs to the UPF0235 family.

The chain is UPF0235 protein Mmc1_3654 from Magnetococcus marinus (strain ATCC BAA-1437 / JCM 17883 / MC-1).